An 864-amino-acid chain; its full sequence is Protein translocase subunit SecA (864 aa).

Residues Gln85, 103–107 (GEGKT), and Asp542 contribute to the ATP site.

It belongs to the SecA family. Monomer and homodimer. Part of the essential Sec protein translocation apparatus which comprises SecA, SecYEG and auxiliary proteins SecDF. Other proteins may also be involved.

Its subcellular location is the cell inner membrane. It is found in the cytoplasm. The catalysed reaction is ATP + H2O + cellular proteinSide 1 = ADP + phosphate + cellular proteinSide 2.. Part of the Sec protein translocase complex. Interacts with the SecYEG preprotein conducting channel. Has a central role in coupling the hydrolysis of ATP to the transfer of proteins into and across the cell membrane, serving as an ATP-driven molecular motor driving the stepwise translocation of polypeptide chains across the membrane. The protein is Protein translocase subunit SecA of Fervidobacterium nodosum (strain ATCC 35602 / DSM 5306 / Rt17-B1).